Reading from the N-terminus, the 157-residue chain is Transcriptional repressor NrdR (157 aa).

The segment at 3–34 is a zinc-finger region; it reads CPKCNSTHSRVVDSRHADEANAIRRRRECENC. The ATP-cone domain occupies 49–139; it reads LIVVKKDGTR…VYKEFKDVDQ (91 aa).

Belongs to the NrdR family. The cofactor is Zn(2+).

Its function is as follows. Negatively regulates transcription of bacterial ribonucleotide reductase nrd genes and operons by binding to NrdR-boxes. The sequence is that of Transcriptional repressor NrdR from Staphylococcus carnosus (strain TM300).